We begin with the raw amino-acid sequence, 170 residues long: Ribosome maturation factor RimM (170 aa).

The 74-residue stretch at Glu95 to Met168 folds into the PRC barrel domain.

The protein belongs to the RimM family. Binds ribosomal protein uS19.

The protein localises to the cytoplasm. In terms of biological role, an accessory protein needed during the final step in the assembly of 30S ribosomal subunit, possibly for assembly of the head region. Essential for efficient processing of 16S rRNA. May be needed both before and after RbfA during the maturation of 16S rRNA. It has affinity for free ribosomal 30S subunits but not for 70S ribosomes. In Oceanobacillus iheyensis (strain DSM 14371 / CIP 107618 / JCM 11309 / KCTC 3954 / HTE831), this protein is Ribosome maturation factor RimM.